The chain runs to 352 residues: Protein-glutamate methylesterase/protein-glutamine glutaminase 2 (352 aa).

The 116-residue stretch at 1-116 (MVVDDSAVVR…KQFLTDSADE (116 aa)) folds into the Response regulatory domain. Position 50 is a 4-aspartylphosphate (Asp50). The 191-residue stretch at 162 to 352 (AQTTERIVAI…MAREIVTQLQ (191 aa)) folds into the CheB-type methylesterase domain. Catalysis depends on residues Ser174, His200, and Asp296.

Belongs to the CheB family. Phosphorylated by CheA. Phosphorylation of the N-terminal regulatory domain activates the methylesterase activity.

Its subcellular location is the cytoplasm. The catalysed reaction is [protein]-L-glutamate 5-O-methyl ester + H2O = L-glutamyl-[protein] + methanol + H(+). It carries out the reaction L-glutaminyl-[protein] + H2O = L-glutamyl-[protein] + NH4(+). Functionally, involved in chemotaxis. Part of a chemotaxis signal transduction system that modulates chemotaxis in response to various stimuli. Catalyzes the demethylation of specific methylglutamate residues introduced into the chemoreceptors (methyl-accepting chemotaxis proteins or MCP) by CheR. Also mediates the irreversible deamidation of specific glutamine residues to glutamic acid. The sequence is that of Protein-glutamate methylesterase/protein-glutamine glutaminase 2 from Xanthomonas axonopodis pv. citri (strain 306).